Reading from the N-terminus, the 1090-residue chain is Protein CHROMATIN REMODELING 24 (1090 aa).

Disordered regions lie at residues 1 to 51 and 247 to 273; these read MAEN…MIKL and VGKQNSYSGRHFDDNSEDNRQGYNLDR. The Nuclear localization signal signature appears at 44-51; that stretch reads TKKSMIKL. Basic and acidic residues predominate over residues 256-273; sequence RHFDDNSEDNRQGYNLDR. Residues 389–564 enclose the Helicase ATP-binding domain; it reads WSLHTQGKGG…WALFNFSCPG (176 aa). 402 to 409 is an ATP binding site; the sequence is DDMGLGKT. The DEAH box signature appears at 515-518; sequence DEGH. Residues 736-895 enclose the Helicase C-terminal domain; that stretch reads FIMSLLENLI…IRYFSQQDLR (160 aa). Residues 1043 to 1069 are a coiled coil; it reads DGGAKIQKQIAELTRELKDMKAAERIN.

It belongs to the SNF2/RAD54 helicase family.

It localises to the nucleus. DNA helicase that acts as an essential component of the spindle assembly checkpoint. Probable chromatin remodeling factor that regulate homologous recombination (HR) and non-homologous recombination (NHR). This chain is Protein CHROMATIN REMODELING 24, found in Arabidopsis thaliana (Mouse-ear cress).